Here is a 343-residue protein sequence, read N- to C-terminus: Phosphoribosylformylglycinamidine cyclo-ligase (343 aa).

Belongs to the AIR synthase family.

The protein localises to the cytoplasm. The enzyme catalyses 2-formamido-N(1)-(5-O-phospho-beta-D-ribosyl)acetamidine + ATP = 5-amino-1-(5-phospho-beta-D-ribosyl)imidazole + ADP + phosphate + H(+). The protein operates within purine metabolism; IMP biosynthesis via de novo pathway; 5-amino-1-(5-phospho-D-ribosyl)imidazole from N(2)-formyl-N(1)-(5-phospho-D-ribosyl)glycinamide: step 2/2. This Carboxydothermus hydrogenoformans (strain ATCC BAA-161 / DSM 6008 / Z-2901) protein is Phosphoribosylformylglycinamidine cyclo-ligase.